We begin with the raw amino-acid sequence, 430 residues long: uncharacterized protein (430 aa).

Residues 1–19 (MKILLFVVLFFNVLVGIYS) form the signal peptide. Asn-39 carries an N-linked (GlcNAc...) asparagine glycan. Positions 119–408 (LDPNSSPSPS…ELLEKNSDGN (290 aa)) are disordered. Pro residues predominate over residues 124 to 168 (SPSPSPSPSPSPSPSPSPSPSPSPSPSPSPSPSPSPSPSPSPSPS). 2 stretches are compositionally biased toward low complexity: residues 169–253 (PSSS…TPSQ) and 263–285 (PTPT…TQTP). Residues 286–303 (ISSRPMSISTEKPSSSEE) are compositionally biased toward polar residues. The N-linked (GlcNAc...) asparagine glycan is linked to Asn-312. Residues 316–325 (SEDKKKDSES) show a composition bias toward basic and acidic residues. Low complexity predominate over residues 326-370 (KSSQSESPSPSASASESESASESASASTSVSVSASPLPIMDSSSS). N-linked (GlcNAc...) asparagine glycosylation is present at Asn-408.

The protein resides in the secreted. This is an uncharacterized protein from Dictyostelium discoideum (Social amoeba).